Consider the following 212-residue polypeptide: Holliday junction branch migration complex subunit RuvA (212 aa).

Residues 1-66 (MISGLKGTLK…ERGQKLFGFL (66 aa)) form a domain I region. Residues 67-145 (TEQDKEFFKV…KLELFLSGTS (79 aa)) are domain II. Residues 146–162 (KEPSISLSSFSETPEEA) form a flexible linker region. A domain III region spans residues 163 to 212 (ALSRKREIAILGLVQLGFEEKTASKEVDKILKSSSPTDPGEIIREILKSL).

Belongs to the RuvA family. Homotetramer. Forms an RuvA(8)-RuvB(12)-Holliday junction (HJ) complex. HJ DNA is sandwiched between 2 RuvA tetramers; dsDNA enters through RuvA and exits via RuvB. An RuvB hexamer assembles on each DNA strand where it exits the tetramer. Each RuvB hexamer is contacted by two RuvA subunits (via domain III) on 2 adjacent RuvB subunits; this complex drives branch migration. In the full resolvosome a probable DNA-RuvA(4)-RuvB(12)-RuvC(2) complex forms which resolves the HJ.

Its subcellular location is the cytoplasm. In terms of biological role, the RuvA-RuvB-RuvC complex processes Holliday junction (HJ) DNA during genetic recombination and DNA repair, while the RuvA-RuvB complex plays an important role in the rescue of blocked DNA replication forks via replication fork reversal (RFR). RuvA specifically binds to HJ cruciform DNA, conferring on it an open structure. The RuvB hexamer acts as an ATP-dependent pump, pulling dsDNA into and through the RuvAB complex. HJ branch migration allows RuvC to scan DNA until it finds its consensus sequence, where it cleaves and resolves the cruciform DNA. The sequence is that of Holliday junction branch migration complex subunit RuvA from Leptospira borgpetersenii serovar Hardjo-bovis (strain JB197).